The sequence spans 757 residues: Dapper homolog 2 (757 aa).

The segment at 1-281 (MWAPSGQGPA…QSPLFALPKE (281 aa)) is inhibition of Nodal signaling. Residues 55-107 (RGQELRLEAALTALREQLSRLRRQDAGLKTHLDQLDQQISELQLDVSRSSCEA) are a coiled coil. 3 disordered regions span residues 486-540 (RRRV…CSES), 584-684 (RWQS…EGCF), and 696-728 (AEAG…PPVP). Basic and acidic residues-rich tracts occupy residues 505–516 (ERQRVTERDPSR) and 631–644 (ACAR…EHSA). Positions 645 to 656 (DCTSLYHSTIAE) are enriched in polar residues. Positions 664-673 (SDHTANRFGD) are enriched in basic and acidic residues. The PDZ-binding motif lies at 754-757 (MTMV).

This sequence belongs to the dapper family. Can form homodimers and heterodimers with DACT1 or DACT3. Interacts with CSNK1D, PKA catalytic subunit, PKC-type kinase, CSNK2B, DVL1, DVL2, DVL3, VANGL1, VANGL2, TGFBR1, CTNNB1, CTNND2, CTNND1, LEF1, TCF7, TCF7L1 and HDAC1. In terms of tissue distribution, expressed in kidney (inner medullary collecting duct). Expressed in epidermal keratinocytes and hair follicles.

Its function is as follows. Involved in regulation of intracellular signaling pathways during development. Negatively regulates the Nodal signaling pathway, possibly by promoting the lysosomal degradation of Nodal receptors, such as TGFBR1. May be involved in control of the morphogenetic behavior of kidney ureteric bud cells by keeping cells epithelial and restraining their mesenchymal character. May play an inhibitory role in the re-epithelialization of skin wounds by attenuating TGF-beta signaling. The protein is Dapper homolog 2 (Dact2) of Mus musculus (Mouse).